Consider the following 289-residue polypeptide: Protoheme IX farnesyltransferase (289 aa).

Helical transmembrane passes span 18 to 38, 40 to 60, 87 to 107, 111 to 131, 139 to 159, 168 to 188, 212 to 232, 234 to 254, and 269 to 289; these read VTSL…EQSP, GFLI…SFIF, VVQA…VLAV, LLTA…YTIF, NIVI…AAIG, SLFM…AIFL, SIFF…FLES, MGFL…ILSY, and FFFS…DHLI.

Belongs to the UbiA prenyltransferase family. Protoheme IX farnesyltransferase subfamily.

Its subcellular location is the cell inner membrane. The enzyme catalyses heme b + (2E,6E)-farnesyl diphosphate + H2O = Fe(II)-heme o + diphosphate. It participates in porphyrin-containing compound metabolism; heme O biosynthesis; heme O from protoheme: step 1/1. In terms of biological role, converts heme B (protoheme IX) to heme O by substitution of the vinyl group on carbon 2 of heme B porphyrin ring with a hydroxyethyl farnesyl side group. This is Protoheme IX farnesyltransferase from Leptospira interrogans serogroup Icterohaemorrhagiae serovar copenhageni (strain Fiocruz L1-130).